We begin with the raw amino-acid sequence, 338 residues long: UPF0324 membrane protein NMA0465 (338 aa).

10 consecutive transmembrane segments (helical) span residues 5-23 (PFYF…ANYL), 33-55 (HISA…YPQF), 62-84 (GVLF…RLTF), 94-116 (AVVT…GIRY), 123-145 (LVYL…AESV), 155-177 (VAIA…FYTW), 222-239 (IRVM…WLLT), 254-273 (IPWF…FDLL), 280-302 (LFVE…TTHA), and 312-334 (PFVL…NYGI).

The protein belongs to the UPF0324 family.

The protein resides in the cell membrane. The sequence is that of UPF0324 membrane protein NMA0465 from Neisseria meningitidis serogroup A / serotype 4A (strain DSM 15465 / Z2491).